A 342-amino-acid chain; its full sequence is Small ribosomal subunit protein uS2 (342 aa).

The interval 235-283 is disordered; that stretch reads EENAPFEQDEPRKPSQKPKQNRPENKPRFDKQAPRAAAKPEVKAEVKPE. Positions 255-283 are enriched in basic and acidic residues; sequence NRPENKPRFDKQAPRAAAKPEVKAEVKPE.

This sequence belongs to the universal ribosomal protein uS2 family.

The chain is Small ribosomal subunit protein uS2 from Acholeplasma laidlawii (strain PG-8A).